The following is a 183-amino-acid chain: ATP synthase subunit b, chloroplastic (183 aa).

The helical transmembrane segment at 25–45 threads the bilayer; that stretch reads DILATNLINLTVVVGVLIFFG.

Belongs to the ATPase B chain family. As to quaternary structure, F-type ATPases have 2 components, F(1) - the catalytic core - and F(0) - the membrane proton channel. F(1) has five subunits: alpha(3), beta(3), gamma(1), delta(1), epsilon(1). F(0) has four main subunits: a(1), b(1), b'(1) and c(10-14). The alpha and beta chains form an alternating ring which encloses part of the gamma chain. F(1) is attached to F(0) by a central stalk formed by the gamma and epsilon chains, while a peripheral stalk is formed by the delta, b and b' chains.

Its subcellular location is the plastid. The protein resides in the chloroplast thylakoid membrane. In terms of biological role, f(1)F(0) ATP synthase produces ATP from ADP in the presence of a proton or sodium gradient. F-type ATPases consist of two structural domains, F(1) containing the extramembraneous catalytic core and F(0) containing the membrane proton channel, linked together by a central stalk and a peripheral stalk. During catalysis, ATP synthesis in the catalytic domain of F(1) is coupled via a rotary mechanism of the central stalk subunits to proton translocation. Its function is as follows. Component of the F(0) channel, it forms part of the peripheral stalk, linking F(1) to F(0). The sequence is that of ATP synthase subunit b, chloroplastic from Sorghum bicolor (Sorghum).